Reading from the N-terminus, the 220-residue chain is GTP cyclohydrolase 1 (220 aa).

Cys-109, His-112, and Cys-180 together coordinate Zn(2+).

The protein belongs to the GTP cyclohydrolase I family. As to quaternary structure, toroid-shaped homodecamer, composed of two pentamers of five dimers.

The catalysed reaction is GTP + H2O = 7,8-dihydroneopterin 3'-triphosphate + formate + H(+). The protein operates within cofactor biosynthesis; 7,8-dihydroneopterin triphosphate biosynthesis; 7,8-dihydroneopterin triphosphate from GTP: step 1/1. This is GTP cyclohydrolase 1 from Yersinia pseudotuberculosis serotype O:1b (strain IP 31758).